A 441-amino-acid chain; its full sequence is RNA-binding protein BRN1 (441 aa).

RRM domains follow at residues 18–99 (VKLF…YADG) and 106–186 (HKLF…WADT). The span at 258 to 273 (QPNQGNNNALQGTSPD) shows a compositional bias: polar residues. Residues 258-282 (QPNQGNNNALQGTSPDSVPPRLARR) are disordered. The region spanning 349-427 (ANLFIYNIPR…KKLKVQLKRD (79 aa)) is the RRM 3 domain.

Highly expressed in stems and cauline leaves, and at lower levels in siliques, flowers, roots and rosette leaves.

The protein localises to the cytoplasm. In terms of biological role, RNA-binding protein involved in the regulation of flowering time. Acts as a repressor of the activity of SOC1, a transcriptional activator of flowering time. Binds to the 3'-UTR of SOC1 mRNA in the cytoplasm and participates in SOC1 mRNA decay, mediated by the distal region of the SOC1 3'-UTR. Acts as a positive regulator of salicylic acid (SA)-mediated immunity. May act on SA signaling-related genes at a post-transcriptional level. This chain is RNA-binding protein BRN1, found in Arabidopsis thaliana (Mouse-ear cress).